A 65-amino-acid chain; its full sequence is Large ribosomal subunit protein bL35 (65 aa).

The protein belongs to the bacterial ribosomal protein bL35 family.

This is Large ribosomal subunit protein bL35 from Prochlorococcus marinus (strain MIT 9301).